The following is a 369-amino-acid chain: Phosphoserine aminotransferase (369 aa).

Arg42 provides a ligand contact to L-glutamate. 4 residues coordinate pyridoxal 5'-phosphate: Trp101, Thr152, Asp176, and Gln199. Lys200 carries the post-translational modification N6-(pyridoxal phosphate)lysine. 241 to 242 (NT) provides a ligand contact to pyridoxal 5'-phosphate.

The protein belongs to the class-V pyridoxal-phosphate-dependent aminotransferase family. SerC subfamily. As to quaternary structure, homodimer. The cofactor is pyridoxal 5'-phosphate.

The protein localises to the cytoplasm. It carries out the reaction O-phospho-L-serine + 2-oxoglutarate = 3-phosphooxypyruvate + L-glutamate. The catalysed reaction is 4-(phosphooxy)-L-threonine + 2-oxoglutarate = (R)-3-hydroxy-2-oxo-4-phosphooxybutanoate + L-glutamate. It functions in the pathway amino-acid biosynthesis; L-serine biosynthesis; L-serine from 3-phospho-D-glycerate: step 2/3. The protein operates within cofactor biosynthesis; pyridoxine 5'-phosphate biosynthesis; pyridoxine 5'-phosphate from D-erythrose 4-phosphate: step 3/5. In terms of biological role, catalyzes the reversible conversion of 3-phosphohydroxypyruvate to phosphoserine and of 3-hydroxy-2-oxo-4-phosphonooxybutanoate to phosphohydroxythreonine. The chain is Phosphoserine aminotransferase from Delftia acidovorans (strain DSM 14801 / SPH-1).